A 130-amino-acid chain; its full sequence is Small ribosomal subunit protein uS11c (130 aa).

The protein belongs to the universal ribosomal protein uS11 family. As to quaternary structure, part of the 30S ribosomal subunit.

The protein resides in the plastid. It is found in the chloroplast. The protein is Small ribosomal subunit protein uS11c of Stigeoclonium helveticum (Green alga).